The sequence spans 147 residues: Hemoglobin subunit beta-1 (147 aa).

V2 carries the post-translational modification N-acetylvaline. The Globin domain maps to 3 to 147 (HLTDAEKAAV…VATALAHKYH (145 aa)). K18 carries the post-translational modification N6-succinyllysine. Residues S21, S45, and S51 each carry the phosphoserine modification. K60 carries the N6-succinyllysine modification. The heme b site is built by H64 and H93. At R105 the chain carries Asymmetric dimethylarginine. The residue at position 124 (T124) is a Phosphothreonine.

The protein belongs to the globin family. Heterotetramer of two alpha chains and two beta chains. As to expression, red blood cells.

In terms of biological role, involved in oxygen transport from the lung to the various peripheral tissues. This Mus musculus (Mouse) protein is Hemoglobin subunit beta-1 (Hbb-b1).